Here is a 79-residue protein sequence, read N- to C-terminus: Large ribosomal subunit protein uL24 (79 aa).

It belongs to the universal ribosomal protein uL24 family. As to quaternary structure, part of the 50S ribosomal subunit.

Its function is as follows. One of two assembly initiator proteins, it binds directly to the 5'-end of the 23S rRNA, where it nucleates assembly of the 50S subunit. In terms of biological role, one of the proteins that surrounds the polypeptide exit tunnel on the outside of the subunit. The sequence is that of Large ribosomal subunit protein uL24 from Lactobacillus delbrueckii subsp. bulgaricus (strain ATCC BAA-365 / Lb-18).